The sequence spans 127 residues: NADPH-dependent 7-cyano-7-deazaguanine reductase (127 aa).

Catalysis depends on Cys40, which acts as the Thioimide intermediate. Asp47 functions as the Proton donor in the catalytic mechanism. Residues 62-64 and 81-82 contribute to the substrate site; these read VEL and HE.

It belongs to the GTP cyclohydrolase I family. QueF type 1 subfamily.

Its subcellular location is the cytoplasm. It carries out the reaction 7-aminomethyl-7-carbaguanine + 2 NADP(+) = 7-cyano-7-deazaguanine + 2 NADPH + 3 H(+). It functions in the pathway tRNA modification; tRNA-queuosine biosynthesis. Its function is as follows. Catalyzes the NADPH-dependent reduction of 7-cyano-7-deazaguanine (preQ0) to 7-aminomethyl-7-deazaguanine (preQ1). This Campylobacter jejuni subsp. jejuni serotype O:2 (strain ATCC 700819 / NCTC 11168) protein is NADPH-dependent 7-cyano-7-deazaguanine reductase.